A 443-amino-acid chain; its full sequence is Pentatricopeptide repeat-containing protein 6, mitochondrial (443 aa).

Residues 1-13 constitute a mitochondrion transit peptide; that stretch reads MRILGSLPNNIRK. PPR repeat units lie at residues 130-164 and 220-254; these read NIVD…RIRP and NSTT…NENS.

Its subcellular location is the mitochondrion. Mitochondrial RNA-binding protein required for the stability of the atp9 mRNA. The sequence is that of Pentatricopeptide repeat-containing protein 6, mitochondrial (ppr6) from Schizosaccharomyces pombe (strain 972 / ATCC 24843) (Fission yeast).